A 90-amino-acid polypeptide reads, in one-letter code: Small ribosomal subunit protein bS16 (90 aa).

This sequence belongs to the bacterial ribosomal protein bS16 family.

This Streptococcus pneumoniae (strain Hungary19A-6) protein is Small ribosomal subunit protein bS16.